Here is a 132-residue protein sequence, read N- to C-terminus: Myelin P2 protein (132 aa).

Serine 2 is subject to N-acetylserine. Arginine 107 lines the (9Z)-octadecenoate pocket. Arginine 107 contacts hexadecanoate. Cysteine 118 and cysteine 125 are oxidised to a cystine. 127 to 129 (RIY) serves as a coordination point for (9Z)-octadecenoate. 127 to 129 (RIY) serves as a coordination point for hexadecanoate.

It belongs to the calycin superfamily. Fatty-acid binding protein (FABP) family. As to quaternary structure, monomer.

The protein localises to the cytoplasm. May play a role in lipid transport protein in Schwann cells. May bind cholesterol. The chain is Myelin P2 protein (PMP2) from Bos taurus (Bovine).